Consider the following 1172-residue polypeptide: Thrombospondin-2 (1172 aa).

A signal peptide spans 1–18 (MVWRLVLLALWVWPSTQA). Residues 19 to 215 (GHQDKDTTFD…LQNVHLVFEN (197 aa)) enclose the Laminin G-like domain. A heparin-binding region spans residues 19–232 (GHQDKDTTFD…KKGCQQGQGA (214 aa)). N-linked (GlcNAc...) asparagine glycans are attached at residues asparagine 151, asparagine 316, and asparagine 330. The VWFC domain occupies 318 to 375 (SACWQDGRFFAENETWVVDSCTTCTCKKFKTICHQITCPPATCASPSFVEGECCPSCL). TSP type-1 domains lie at 381–431 (EEGW…SKCD), 437–492 (DGGW…APCP), and 494–549 (DGRW…RSCP). Intrachain disulfides connect cysteine 393-cysteine 425, cysteine 397-cysteine 430, cysteine 408-cysteine 415, cysteine 449-cysteine 486, cysteine 453-cysteine 491, cysteine 464-cysteine 476, cysteine 506-cysteine 543, cysteine 510-cysteine 548, cysteine 521-cysteine 533, cysteine 553-cysteine 564, cysteine 558-cysteine 574, cysteine 577-cysteine 588, cysteine 594-cysteine 610, cysteine 601-cysteine 619, cysteine 622-cysteine 646, cysteine 652-cysteine 665, cysteine 659-cysteine 678, cysteine 680-cysteine 691, cysteine 707-cysteine 715, cysteine 720-cysteine 740, cysteine 756-cysteine 776, cysteine 779-cysteine 799, cysteine 815-cysteine 835, cysteine 838-cysteine 858, cysteine 876-cysteine 896, cysteine 912-cysteine 932, and cysteine 948-cysteine 1169. The N-linked (GlcNAc...) asparagine glycan is linked to asparagine 457. The region spanning 549–589 (PVDGCLSNPCFPGAQCSSFPDGSWSCGSCPVGFLGNGTHCE) is the EGF-like 1 domain. Residue asparagine 584 is glycosylated (N-linked (GlcNAc...) asparagine). Residues 648-692 (PENPCKDKTHNCHKHAECIYLGHFSDPMYKCECQTGYAGDGLICG) form the EGF-like 2 domain. TSP type-3 repeat units follow at residues 693–728 (EDSD…NSGQ), 729–764 (EDFD…NPRQ), 765–787 (ADYD…NPAQ), 788–823 (IDTD…NTDQ), 824–846 (RDTD…NPDQ), 847–884 (TDVD…NANQ), 885–920 (ADHD…NPDQ), and 921–956 (EDLD…AISE). An N-linked (GlcNAc...) asparagine glycan is attached at asparagine 710. Residues 843–931 (NPDQTDVDND…DLDGDGRGDI (89 aa)) form a disordered region. Positions 847–866 (TDVDNDLVGDQCDNNEDIDD) are enriched in acidic residues. Over residues 870–884 (QNNQDNCPYISNANQ) the composition is skewed to polar residues. Positions 896–905 (CDPDDDNDGV) are enriched in acidic residues. A Cell attachment site motif is present at residues 928 to 930 (RGD). One can recognise a TSP C-terminal domain in the interval 960–1172 (RNFQMVPLDP…SDLKYECRDI (213 aa)). Asparagine 1069 is a glycosylation site (N-linked (GlcNAc...) asparagine).

It belongs to the thrombospondin family. As to quaternary structure, homotrimer; disulfide-linked. Interacts (via the TSP type I repeats) with CD36; the interaction conveys an antiangiogenic effect. Interacts (via the TSP type I repeats) with HRG; the interaction blocks the antiangiogenic effect of THBS2 with CD36. Can bind to fibrinogen, fibronectin, laminin and type V collagen. High expression in invertebral disk tissue.

In terms of biological role, adhesive glycoprotein that mediates cell-to-cell and cell-to-matrix interactions. Ligand for CD36 mediating antiangiogenic properties. This chain is Thrombospondin-2 (THBS2), found in Homo sapiens (Human).